Reading from the N-terminus, the 408-residue chain is tRNA-specific 2-thiouridylase MnmA (408 aa).

Residues 27–34 (AMSGGVDS) and Leu-53 each bind ATP. The active-site Nucleophile is Cys-121. Cys-121 and Cys-222 are joined by a disulfide. Gly-145 is an ATP binding site. The interaction with tRNA stretch occupies residues 172–174 (RDQ). Cys-222 serves as the catalytic Cysteine persulfide intermediate.

This sequence belongs to the MnmA/TRMU family.

Its subcellular location is the cytoplasm. It carries out the reaction S-sulfanyl-L-cysteinyl-[protein] + uridine(34) in tRNA + AH2 + ATP = 2-thiouridine(34) in tRNA + L-cysteinyl-[protein] + A + AMP + diphosphate + H(+). Its function is as follows. Catalyzes the 2-thiolation of uridine at the wobble position (U34) of tRNA, leading to the formation of s(2)U34. The protein is tRNA-specific 2-thiouridylase MnmA of Rhizobium etli (strain CIAT 652).